Here is a 537-residue protein sequence, read N- to C-terminus: Chaperonin GroEL (537 aa).

ATP is bound by residues 30–33, 87–91, Gly414, 477–479, and Asp493; these read TLGP, DGTTT, and DAV.

This sequence belongs to the chaperonin (HSP60) family. Forms a cylinder of 14 subunits composed of two heptameric rings stacked back-to-back. Interacts with the co-chaperonin GroES.

The protein resides in the cytoplasm. It catalyses the reaction ATP + H2O + a folded polypeptide = ADP + phosphate + an unfolded polypeptide.. Its function is as follows. Together with its co-chaperonin GroES, plays an essential role in assisting protein folding. The GroEL-GroES system forms a nano-cage that allows encapsulation of the non-native substrate proteins and provides a physical environment optimized to promote and accelerate protein folding. The sequence is that of Chaperonin GroEL from Coprothermobacter proteolyticus (strain ATCC 35245 / DSM 5265 / OCM 4 / BT).